Here is a 407-residue protein sequence, read N- to C-terminus: Imidazolonepropionase (407 aa).

H68 and H70 together coordinate Fe(3+). Zn(2+)-binding residues include H68 and H70. Positions 77, 140, and 173 each coordinate 4-imidazolone-5-propanoate. Y140 contacts N-formimidoyl-L-glutamate. Position 238 (H238) interacts with Fe(3+). H238 provides a ligand contact to Zn(2+). Q241 provides a ligand contact to 4-imidazolone-5-propanoate. D313 lines the Fe(3+) pocket. D313 serves as a coordination point for Zn(2+). The N-formimidoyl-L-glutamate site is built by N315 and G317. Position 318 (T318) interacts with 4-imidazolone-5-propanoate.

It belongs to the metallo-dependent hydrolases superfamily. HutI family. The cofactor is Zn(2+). It depends on Fe(3+) as a cofactor.

It localises to the cytoplasm. The catalysed reaction is 4-imidazolone-5-propanoate + H2O = N-formimidoyl-L-glutamate. Its pathway is amino-acid degradation; L-histidine degradation into L-glutamate; N-formimidoyl-L-glutamate from L-histidine: step 3/3. Catalyzes the hydrolytic cleavage of the carbon-nitrogen bond in imidazolone-5-propanoate to yield N-formimidoyl-L-glutamate. It is the third step in the universal histidine degradation pathway. The polypeptide is Imidazolonepropionase (Burkholderia cenocepacia (strain HI2424)).